Here is a 454-residue protein sequence, read N- to C-terminus: Guanine deaminase (454 aa).

Zn(2+) contacts are provided by His82 and His84. Residues 84–87 (HAPQ), 213–214 (RF), 240–243 (HISE), and Asp330 contribute to the substrate site. Zn(2+) contacts are provided by His240 and Asp330. A Phosphoserine modification is found at Ser453.

Belongs to the metallo-dependent hydrolases superfamily. ATZ/TRZ family. Homodimer. Requires Zn(2+) as cofactor.

The enzyme catalyses guanine + H2O + H(+) = xanthine + NH4(+). It participates in purine metabolism; guanine degradation; xanthine from guanine: step 1/1. Functionally, catalyzes the hydrolytic deamination of guanine, producing xanthine and ammonia. The sequence is that of Guanine deaminase from Mus musculus (Mouse).